We begin with the raw amino-acid sequence, 199 residues long: Carbon disulfide hydrolase (199 aa).

The Zn(2+) site is built by Cys-36, His-91, and Cys-94.

The protein belongs to the beta-class carbonic anhydrase family. As to quaternary structure, exists as both octamers and hexadecamers in solution. The hexadecameric homooligomer may form a catenane, through interactions of two interlocked octameric rings. Requires Zn(2+) as cofactor.

It carries out the reaction carbon disulfide + 2 H2O = 2 hydrogen sulfide + CO2 + 2 H(+). It functions in the pathway sulfur metabolism; hydrogen sulfide biosynthesis. Its function is as follows. Catalyzes the conversion of carbon disulfide into hydrogen sulfide and carbon dioxide, with carbonyl sulfide as an intermediate. Likely plays a key role in sulfur metabolism that allows A.thiooxidans G8 to grow on carbon disulfide as the main carbon and energy source. Does not show carbonic anhydrase activity (hydration of CO(2) to carbonate). The chain is Carbon disulfide hydrolase from Acidithiobacillus thiooxidans (Thiobacillus thiooxidans).